A 402-amino-acid polypeptide reads, in one-letter code: Advanced glycosylation end product-specific receptor (402 aa).

An N-terminal signal peptide occupies residues 1-22 (MPAGTAARAWVLVLALWGAVAG). The 87-residue stretch at 23–109 (GQNITARIGE…ATNRRGKEVK (87 aa)) folds into the Ig-like V-type domain. The Extracellular portion of the chain corresponds to 23-340 (GQNITARIGE…VGESGLGTLA (318 aa)). N-linked (GlcNAc...) asparagine glycans are attached at residues Asn25 and Asn80. 2 disulfides stabilise this stretch: Cys38-Cys98 and Cys143-Cys206. 2 consecutive Ig-like C2-type domains span residues 123–219 (PEIV…RPLN) and 233–315 (PEGI…PPVS). The disordered stretch occupies residues 295–332 (GTYSCVATHPSHGPQESPPVSIRVTETGDEGPAEGSVG). The chain crosses the membrane as a helical span at residues 341 to 361 (LALGILGGLGVVALLVGAILW). Topologically, residues 362-402 (RKRQPRREERKAPESQEDEEERAELNQSEEAEMPENGAGGP) are cytoplasmic. Positions 365–402 (QPRREERKAPESQEDEEERAELNQSEEAEMPENGAGGP) are disordered. Ser376 and Ser389 each carry phosphoserine; by ATM. A compositionally biased stretch (acidic residues) spans 376-394 (SQEDEEERAELNQSEEAEM).

As to quaternary structure, constitutive homodimer; disulfide-linked. Forms homooligomers. Interacts with S100A1 and APP. Interacts with S100B, S100A12 and S100A14. Interacts with TIRAP. Interacts with HMGB1. Interacts with LGP2; this interaction plays an important role in AGER-mediated pro-inflammatory responses and cytokine release. Interacts with double-strand break repair protein MRE11 which is a core component of the MRN complex; the interaction enhances MRE11 endonuclease activity and promotes DNA repair. Interacts with the MCM2-7 complex via interaction with complex member MCM2; the interaction is increased following DNA replication stress and stabilizes the MCM2-7 complex at replication forks. In terms of processing, phosphorylated on its cytoplasmic domain by PKCzeta/PRKCZ upon ligand binding. Phosphorylated by ATM following DNA damage. Targeted by the ubiquitin E3 ligase subunit FBXO10 to mediate its ubiquitination and degradation. As to expression, isoform 1: Expressed at higher levels in the coronary arterioles in type 2 diabetic mice (at protein level). Endothelial cells. Expressed in lung, kidney, brain and heart. Most prevalent isoform with the highest level in heart. Isoform 2: Expressed in brain, lung, kidney and small intestine with the highest level in lung. Expressed in brain, lung, kidney and small intestine with the highest level in small intestine (at protein level). Detected in neurons of the cerebrum, bronchial epithelium, endothelial cells, tubular cells of kidney and epithelial cells of small intestine (at protein level). Expression is increased in the kidney of diabetic wild-type mice (at protein level), but not in the other tissues. Expressed only in kidney. Expression is increased in the kidney of diabetic mice. Isoform 3: Expressed in lung, kidney and heart. The second most prevalent isoform with the highest level in lung. Not expressed in brain. Isoform 4: Expressed at very low level in lung only. Isoform 5: Expressed at very low level in lung only. Isoform 6: Expressed at very low level in lung only. Isoform 7: Expressed at very low level in heart only. Isoform 8: Expressed at very low level in lung only. Isoform 9: Expressed at very low level in heart only. Isoform 10: Expressed in lung, brain, heart and kidney with a very high level in kidney. Isoform 11: Expressed in brain, kidney and heart. Not expressed in lung. Isoform 12: Expressed at very low level in lung and kidney. Isoform 13: Expressed at very low level in lung only.

Its subcellular location is the cell membrane. The protein localises to the cell projection. The protein resides in the phagocytic cup. It localises to the early endosome. It is found in the nucleus. Its subcellular location is the secreted. Functionally, cell surface pattern recognition receptor that senses endogenous stress signals with a broad ligand repertoire including advanced glycation end products, S100 proteins, high-mobility group box 1 protein/HMGB1, amyloid beta/APP oligomers, nucleic acids, histones, phospholipids and glycosaminoglycans. Advanced glycosylation end products are nonenzymatically glycosylated proteins which accumulate in vascular tissue in aging and at an accelerated rate in diabetes. These ligands accumulate at inflammatory sites during the pathogenesis of various diseases including diabetes, vascular complications, neurodegenerative disorders and cancers, and RAGE transduces their binding into pro-inflammatory responses. Upon ligand binding, uses TIRAP and MYD88 as adapters to transduce the signal ultimately leading to the induction of inflammatory cytokines IL6, IL8 and TNFalpha through activation of NF-kappa-B. Interaction with S100A12 on endothelium, mononuclear phagocytes, and lymphocytes triggers cellular activation, with generation of key pro-inflammatory mediators. Interaction with S100B after myocardial infarction may play a role in myocyte apoptosis by activating ERK1/2 and p53/TP53 signaling. Contributes to the translocation of amyloid-beta peptide (ABPP) across the cell membrane from the extracellular to the intracellular space in cortical neurons. ABPP-initiated RAGE signaling, especially stimulation of p38 mitogen-activated protein kinase (MAPK), has the capacity to drive a transport system delivering ABPP as a complex with RAGE to the intraneuronal space. Participates in endothelial albumin transcytosis together with HMGB1 through the RAGE/SRC/Caveolin-1 pathway, leading to endothelial hyperpermeability. Mediates the loading of HMGB1 in extracellular vesicles (EVs) that shuttle HMGB1 to hepatocytes by transferrin-mediated endocytosis and subsequently promote hepatocyte pyroptosis by activating the NLRP3 inflammasome. Binds to DNA and promotes extracellular hypomethylated DNA (CpG DNA) uptake by cells via the endosomal route to activate inflammatory responses. Mediates phagocytosis by non-professional phagocytes (NPP) and this is enhanced by binding to ligands including RNA, DNA, HMGB1 and histones. Promotes NPP-mediated phagocytosis of Saccharomyces cerevisiae spores by binding to RNA attached to the spore wall. Also promotes NPP-mediated phagocytosis of apoptotic cells. Following DNA damage, recruited to DNA double-strand break sites where it colocalizes with the MRN repair complex via interaction with double-strand break repair protein MRE11. Enhances the endonuclease activity of MRE11, promoting the end resection of damaged DNA. Promotes DNA damage repair in trophoblasts which enhances trophoblast invasion and contributes to placental development and maintenance. Protects cells from DNA replication stress by localizing to damaged replication forks where it stabilizes the MCM2-7 complex and promotes faithful progression of the replication fork. In terms of biological role, is able to advanced glycosylation end product (AGE)-induce nuclear factor NF-kappa-B activation. Down-regulates receptor for advanced glycosylation end products (RAGE)-ligand induced signaling through various MAPK pathways including ERK1/2, p38 and SAPK/JNK. Significantly affects tumor cell properties through decreasing cell migration, invasion, adhesion and proliferation, and increasing cellular apoptosis. Exhibits drastic inhibition on tumorigenesis in vitro. The protein is Advanced glycosylation end product-specific receptor (Ager) of Mus musculus (Mouse).